A 101-amino-acid chain; its full sequence is Secreted RxLR effector protein 64 (101 aa).

A signal peptide spans methionine 1 to glycine 23. The RxLR signature appears at arginine 48 to arginine 51. The chain crosses the membrane as a helical span at residues leucine 67–phenylalanine 87.

The protein belongs to the RxLR effector family.

It localises to the secreted. It is found in the host cytoplasm. Its subcellular location is the host nucleus. The protein resides in the membrane. Effector that acts as a broad suppressor of cell death to interrupt plant immunity. Inhibits cell death induced by cell death-inducing proteins, including the PAMP elicitor INF1 from P.infestans. This is Secreted RxLR effector protein 64 from Plasmopara viticola (Downy mildew of grapevine).